The following is a 136-amino-acid chain: Small ribosomal subunit protein uS8 (136 aa).

The protein belongs to the universal ribosomal protein uS8 family. As to quaternary structure, part of the 30S ribosomal subunit. Contacts proteins S5 and S12.

In terms of biological role, one of the primary rRNA binding proteins, it binds directly to 16S rRNA central domain where it helps coordinate assembly of the platform of the 30S subunit. The polypeptide is Small ribosomal subunit protein uS8 (Frankia alni (strain DSM 45986 / CECT 9034 / ACN14a)).